A 227-amino-acid polypeptide reads, in one-letter code: A-type potassium channel modulatory protein KCNIP1 (227 aa).

The region spanning 38–94 (LEMTMVCHRPEGLEQLEAQTNFTKRELQVLYRGFKNECPSGVVNEDTFKQIYAQFFP) is the EF-hand 1; degenerate domain. 3 consecutive EF-hand domains span residues 97 to 132 (DAST…LLRG), 133 to 168 (TVHE…IYDM), and 181 to 216 (TPRQ…DDNI). Aspartate 146, asparagine 148, aspartate 150, tyrosine 152, glutamate 157, aspartate 194, asparagine 196, aspartate 198, and glutamate 205 together coordinate Ca(2+). The interaction with KCND2 stretch occupies residues 214 to 227 (DNIMRSLQLFQNVM).

This sequence belongs to the recoverin family. In terms of assembly, component of heteromultimeric potassium channels. Identified in potassium channel complexes containing KCND1, KCND2, KCND3, KCNIP1, KCNIP2, KCNIP3, KCNIP4, DPP6 and DPP10. Part of a heterooctamer composed of the tetrameric channel and four KCNIP1 chains. Probably part of a complex consisting of KCNIP1, KCNIP2 isoform 3 and KCND2. Self-associates to form homodimers and homotetramers. Interacts with KCNIP2 isoform 3 in a calcium-dependent manner. Interacts with Naja atra venom CTX3. Interacts with KCND2; this interaction mediates the capture of both the N- and C-terminus of KCND2, thus preventing KCND2 N-type inactivation and modulates the channel gating kinetics. Interacts with KCND3; each KCNIP1 monomer interacts with two adjacent KCND3 subunits, through both the N-terminal inactivation ball of a KCND3 subunit and a C-terminal helix from the adjacent KCND3 subunit, clamping them together; this interaction stabilizes the tetrameric form and modulates the channel gating kinetics namely channel activation and inactivation kinetics and rate of recovery from inactivation. Isoform 1 and isoform 2 are expressed in brain and kidney. Isoform 1 is also expressed in liver, pancreas, skeletal muscle, small intestine and testis. Isoform 2 is also expressed in lung, pancreas, leukocytes, prostate and thymus.

The protein resides in the cell membrane. The protein localises to the cytoplasm. Its subcellular location is the cell projection. It is found in the dendrite. Its function is as follows. Regulatory subunit of Kv4/D (Shal)-type voltage-gated rapidly inactivating A-type potassium channels. Regulates channel density, inactivation kinetics and rate of recovery from inactivation in a calcium-dependent and isoform-specific manner. In vitro, modulates KCND1/Kv4.1 and KCND2/Kv4.2 currents. Increases the presence of KCND2 at the cell surface. This Homo sapiens (Human) protein is A-type potassium channel modulatory protein KCNIP1.